Here is a 689-residue protein sequence, read N- to C-terminus: Armadillo-like helical domain-containing protein 3 (689 aa).

The helical transmembrane segment at 520-538 (IFTLALMIVNLFNMFITYG) threads the bilayer.

This sequence belongs to the ARMH3 family. Interacts with PI4KB. Interacts with GBF1.

The protein resides in the golgi apparatus membrane. It is found in the cytoplasm. Its function is as follows. Involved in GBF1 recruitment, Golgi maintenance and protein secretion. The chain is Armadillo-like helical domain-containing protein 3 from Homo sapiens (Human).